A 134-amino-acid chain; its full sequence is Interleukin-5 (134 aa).

Residues 1–19 (MRMLLHLSLLALGAAYVYA) form the signal peptide. Thr22 carries an O-linked (GalNAc...) threonine glycan. 2 N-linked (GlcNAc...) asparagine glycosylation sites follow: Asn47 and Asn90.

It belongs to the IL-5 family. Homodimer; disulfide-linked. Interacts with IL5RA. Interacts with CSF2RB.

It is found in the secreted. Its function is as follows. Homodimeric cytokine expressed predominantly by T-lymphocytes and NK cells that plays an important role in the survival, differentiation, and chemotaxis of eosinophils. Also acts on activated and resting B-cells to induce immunoglobulin production, growth, and differentiation. Mechanistically, exerts its biological effects through a receptor composed of IL5RA subunit and the cytokine receptor common subunit beta/CSF2RB. Binding to the receptor leads to activation of various kinases including LYN, SYK and JAK2 and thereby propagates signals through the RAS-MAPK and JAK-STAT5 pathways respectively. This Macaca mulatta (Rhesus macaque) protein is Interleukin-5 (IL5).